A 31-amino-acid chain; its full sequence is Cliotide T10 (31 aa).

Positions 1–31 form a cross-link, cyclopeptide (Gly-Asn); the sequence is GIPCGESCVYIPCTVTALLGCSCKDKVCYKN. Intrachain disulfides connect Cys-4–Cys-21, Cys-8–Cys-23, and Cys-13–Cys-28.

Post-translationally, contains 3 disulfide bonds. In terms of processing, this is a cyclic peptide. Expressed in seed, root and nodule but not in flower, stem, shoot, leaf and pod (at protein level).

Functionally, probably participates in a plant defense mechanism. The chain is Cliotide T10 from Clitoria ternatea (Butterfly pea).